A 547-amino-acid polypeptide reads, in one-letter code: Eukaryotic translation initiation factor 3 subunit D (547 aa).

2 disordered regions span residues 1-22 (MANF…PSTS) and 114-159 (SVRG…TRDS). The segment covering 126 to 148 (GRGGQRGGFSTRGGRGGARGGYG) has biased composition (gly residues). Residues 284–298 (PLDYITVNENAADPP) are RNA gate.

It belongs to the eIF-3 subunit D family. In terms of assembly, component of the eukaryotic translation initiation factor 3 (eIF-3) complex.

It is found in the cytoplasm. In terms of biological role, mRNA cap-binding component of the eukaryotic translation initiation factor 3 (eIF-3) complex, which is involved in protein synthesis of a specialized repertoire of mRNAs and, together with other initiation factors, stimulates binding of mRNA and methionyl-tRNAi to the 40S ribosome. The eIF-3 complex specifically targets and initiates translation of a subset of mRNAs involved in cell proliferation. In the eIF-3 complex, eif3d specifically recognizes and binds the 7-methylguanosine cap of a subset of mRNAs. The chain is Eukaryotic translation initiation factor 3 subunit D from Cryptococcus neoformans var. neoformans serotype D (strain B-3501A) (Filobasidiella neoformans).